The primary structure comprises 1462 residues: Serine/threonine-protein kinase HSL1 (1462 aa).

Disordered regions lie at residues 1–26 (MSTVVNRRSSHQFDSPSNHLDHSSSM) and 41–69 (RLSQISTNTNNSNKKRKTQNKIGPWKLGR). In terms of domain architecture, Protein kinase spans 65–330 (WKLGRTLGRG…IDAILTHPLL (266 aa)). Residues 71 to 79 (LGRGSTGRV) and Lys94 contribute to the ATP site. Asp201 acts as the Proton acceptor in catalysis. 6 disordered regions span residues 412-450 (SNSFNSSNDVDSARSLPRSTSYVKTTVTDHATGEKHTTV), 471-540 (SAKG…TSVN), 598-637 (ENSKPVSKTPVSQLPPPPPPPIETPTSRTNSVKRGKTWSL), 992-1031 (EDEEFEDEKPFISVPSSEDDEGNTHKNKRGGLRDSGNYDF), 1095-1230 (KETL…QQTK), and 1269-1321 (NRAA…LQKE). Composition is skewed to polar residues over residues 428–440 (PRSTSYVKTTVTD) and 471–487 (SAKGNVLSNITNRPNTP). Positions 510–526 (ASRSRNASSRSLKSNSS) are enriched in low complexity. Over residues 527 to 540 (TGRNGNNASVTSVN) the composition is skewed to polar residues. Positions 610–620 (QLPPPPPPPIE) are enriched in pro residues. The stretch at 636-715 (SLARRERELA…KLQKHQSAHD (80 aa)) forms a coiled coil. The segment covering 1095–1130 (KETLLKNHSSDEATIEVKEDNNEHDFNDKIKQHYDD) has biased composition (basic and acidic residues). Positions 1131-1153 (NGDSEEDDEDEDEEEEDDDDDDD) are enriched in acidic residues. Polar residues-rich tracts occupy residues 1165–1176 (HNYSLAEITSES), 1197–1218 (STGIFSTTQFPRSPYVVNNNGD), and 1292–1302 (NISQPLSSPTK).

It belongs to the protein kinase superfamily. CAMK Ser/Thr protein kinase family. NIM1 subfamily. In terms of processing, phosphorylated throughout the cell cycle, except for the G1 phase.

The protein localises to the bud neck. The catalysed reaction is L-seryl-[protein] + ATP = O-phospho-L-seryl-[protein] + ADP + H(+). It carries out the reaction L-threonyl-[protein] + ATP = O-phospho-L-threonyl-[protein] + ADP + H(+). Its function is as follows. Protein kinase involved in determination of morphology during the cell cycle of both yeast-form and hyphal cells via regulation of SWE1 and CDC28. Regulates pseudohypha formation, but is not required for septin ring organization or septum formation. Plays an essential role in virulence in a mouse model. This chain is Serine/threonine-protein kinase HSL1 (HSL1), found in Candida albicans (strain SC5314 / ATCC MYA-2876) (Yeast).